A 378-amino-acid chain; its full sequence is Probable E3 ubiquitin-protein ligase LUL3 (378 aa).

A compositionally biased stretch (basic residues) spans 1–21; it reads MGISLSKRRRDNNNNHHHPHH. The segment at 1 to 79 is disordered; it reads MGISLSKRRR…PPSQISYRPY (79 aa). Gly-2 carries the N-myristoyl glycine lipid modification. 2 stretches are compositionally biased toward pro residues: residues 29 to 38 and 55 to 72; these read DPPPQQPPPQ and SLPPPPAQPPSSSQPPPS. The DAR2 domain stretch occupies residues 164-283; the sequence is FVFDALFDGS…GSFKVKVMKQ (120 aa). The segment at 321–360 adopts an RING-type; atypical zinc-finger fold; sequence CVICLTEPKDTAVMPCRHLCLCSDCAEELRFQTNKCPICR.

This sequence belongs to the RING-type zinc finger family. LOG2 subfamily. Myristoylated (in vitro).

The enzyme catalyses S-ubiquitinyl-[E2 ubiquitin-conjugating enzyme]-L-cysteine + [acceptor protein]-L-lysine = [E2 ubiquitin-conjugating enzyme]-L-cysteine + N(6)-ubiquitinyl-[acceptor protein]-L-lysine.. It participates in protein modification; protein ubiquitination. Functionally, acts as an E3 ubiquitin-protein ligase, or as part of E3 complex, which accepts ubiquitin from specific E2 ubiquitin-conjugating enzymes and then transfers it to substrates (in vitro). The sequence is that of Probable E3 ubiquitin-protein ligase LUL3 (LUL3) from Arabidopsis thaliana (Mouse-ear cress).